The primary structure comprises 140 residues: Large ribosomal subunit protein uL13 (140 aa).

The protein belongs to the universal ribosomal protein uL13 family. As to quaternary structure, part of the 50S ribosomal subunit.

This protein is one of the early assembly proteins of the 50S ribosomal subunit, although it is not seen to bind rRNA by itself. It is important during the early stages of 50S assembly. This chain is Large ribosomal subunit protein uL13, found in Sulfurimonas denitrificans (strain ATCC 33889 / DSM 1251) (Thiomicrospira denitrificans (strain ATCC 33889 / DSM 1251)).